The primary structure comprises 322 residues: MEDPVFTFGLIADVQYADIEDGENYLRTRRRYYRGSADLLRDAVLQWRRERVQCVVQLGDIIDGHNRRRDASDRALDTVMAELDACSVDVHHVWGNHEFYNFSRPSLLSSRLNSAQRTGTDTGSDLIGDDIYAYEFSPAPNFRFVLLDAYDLSVIGREEESEKHTHSWRILTQHNHNLQDLNLPPVSVGLEQRFVKFNGGFSEQQLQWLDAVLTLSDHKQERVLIFSHLPVHPCAADPICLAWNHEAVLSVLRSHQSVLCFIAGHDHDGGRCTDSSGAQHITLEGVIETPPHSHAFATAYLYEDRMVMKGRGRVEDLTITYS.

Residues D13, Q15, D60, N96, H228, H265, and H267 each coordinate Zn(2+).

It belongs to the ADPRibase-Mn family. As to quaternary structure, monomer. Requires Mg(2+) as cofactor.

It catalyses the reaction CDP-choline + H2O = phosphocholine + CMP + 2 H(+). It carries out the reaction ADP-D-ribose + H2O = D-ribose 5-phosphate + AMP + 2 H(+). The catalysed reaction is CDP-glycerol + H2O = sn-glycerol 3-phosphate + CMP + 2 H(+). In terms of biological role, hydrolyzes ADP-ribose, IDP-ribose, CDP-glycerol, CDP-choline and CDP-ethanolamine, but not other non-reducing ADP-sugars or CDP-glucose. The sequence is that of Manganese-dependent ADP-ribose/CDP-alcohol diphosphatase (adprm) from Danio rerio (Zebrafish).